The sequence spans 265 residues: UPF0354 protein GTNG_2723 (265 aa).

The protein belongs to the UPF0354 family.

The polypeptide is UPF0354 protein GTNG_2723 (Geobacillus thermodenitrificans (strain NG80-2)).